A 963-amino-acid polypeptide reads, in one-letter code: Copalyl diphosphate synthase (963 aa).

The interval 1-539 (MSPMDLQESA…EAYILAALKR (539 aa)) is type II terpene cyclase (TC). The tract at residues 227–292 (ATQWDDECED…FIEKIRSYLH (66 aa)) is substrate binding. Residues Asp311 and Asp314 each contribute to the Mg(2+) site. The short motif at 311-314 (DADD) is the DXDD element. Positions 333–341 (AMLKEFEEE) match the NSE/DTE motif. Substrate is bound by residues 337–341 (EFEEE) and 521–522 (VT). Residues 540-659 (AADLPDENAE…SVSVHTDHSD (120 aa)) are linker. Over residues 627 to 648 (TNGHYVNGTNHETPLTNGISNG) the composition is skewed to polar residues. Residues 627–657 (TNGHYVNGTNHETPLTNGISNGDSVSVHTDH) are disordered. Residues 660 to 963 (SYYQRSDWTA…KILARMSLEL (304 aa)) are geranylfarnesyl diphosphate synthase (PT). Isopentenyl diphosphate is bound by residues Lys688, Arg691, and His720. Residues Asp727 and Asp731 each coordinate Mg(2+). Positions 727–731 (DDIQD) match the DDXXD 1 motif. Residue Arg736 participates in dimethylallyl diphosphate binding. Arg737 contacts isopentenyl diphosphate. Dimethylallyl diphosphate-binding residues include Lys814, Thr815, Gln848, Asn855, Lys865, and Lys875. The DDXXD 2 signature appears at 851–855 (DDYLN).

The protein in the N-terminal section; belongs to the terpene synthase family. This sequence in the C-terminal section; belongs to the FPP/GGPP synthase family. Homohexamer. Requires Mg(2+) as cofactor.

The enzyme catalyses isopentenyl diphosphate + (2E,6E)-farnesyl diphosphate = (2E,6E,10E)-geranylgeranyl diphosphate + diphosphate. The catalysed reaction is (2E,6E,10E)-geranylgeranyl diphosphate = (+)-copalyl diphosphate. Functionally, bifunctional terpene synthase that possesses both prenyltransferase and type II terpene cyclase activity, converting isopentenyl diphosphate (IPP) and dimethylallyl diphosphate (DMAPP) into geranylgeranyl diphosphate (GGPP) and further converting GGPP into copalyl diphosphate, respectively. The polypeptide is Copalyl diphosphate synthase (Talaromyces verruculosus (Penicillium verruculosum)).